Reading from the N-terminus, the 360-residue chain is Phospho-N-acetylmuramoyl-pentapeptide-transferase (360 aa).

10 consecutive transmembrane segments (helical) span residues 21–41 (YLSF…LWMG), 73–93 (TMGG…WANL), 94–114 (SNPY…VGFV), 132–152 (WKYF…YAYG), 168–188 (VMPQ…VGTS), 199–219 (GLAI…AWAT), 236–256 (ASEL…FLWF), 263–283 (VFMG…IAVL), 288–308 (LVLV…ILQV), and 338–358 (VIVR…ATLK).

Belongs to the glycosyltransferase 4 family. MraY subfamily. Mg(2+) serves as cofactor.

Its subcellular location is the cell inner membrane. It carries out the reaction UDP-N-acetyl-alpha-D-muramoyl-L-alanyl-gamma-D-glutamyl-meso-2,6-diaminopimeloyl-D-alanyl-D-alanine + di-trans,octa-cis-undecaprenyl phosphate = di-trans,octa-cis-undecaprenyl diphospho-N-acetyl-alpha-D-muramoyl-L-alanyl-D-glutamyl-meso-2,6-diaminopimeloyl-D-alanyl-D-alanine + UMP. It participates in cell wall biogenesis; peptidoglycan biosynthesis. Its function is as follows. Catalyzes the initial step of the lipid cycle reactions in the biosynthesis of the cell wall peptidoglycan: transfers peptidoglycan precursor phospho-MurNAc-pentapeptide from UDP-MurNAc-pentapeptide onto the lipid carrier undecaprenyl phosphate, yielding undecaprenyl-pyrophosphoryl-MurNAc-pentapeptide, known as lipid I. This is Phospho-N-acetylmuramoyl-pentapeptide-transferase from Vibrio vulnificus (strain YJ016).